We begin with the raw amino-acid sequence, 229 residues long: MNNLKEAIKQAEHIVFLTGAGVSVPSGIPDYRSKNGLYAGMSSPEYMLSHTCLVREPEKFYQFVTENMYYPDAVPNTIHRKMAEIEADKNVTVITQNIDGLHEKAGSKKVVNFHGSLYHCYCQKCGRSVSASDYLQSDIHADCGGVVRPDVVLYEEAISESAIDQSLAAIREADLIVIVGTSFRVSPFCNLTDYRNKKARIFAVNKERISLPYPFEMIENDAVKVFAEI.

One can recognise a Deacetylase sirtuin-type domain in the interval 1 to 229 (MNNLKEAIKQ…NDAVKVFAEI (229 aa)). The NAD(+) site is built by Ala-20, Arg-32, Gln-96, Ile-98, Asp-99, His-114, Thr-181, Ser-182, Asn-205, and Val-223. Nicotinamide-binding residues include Ile-98 and Asp-99. His-114 serves as the catalytic Proton acceptor.

This sequence belongs to the sirtuin family. Class U subfamily.

It localises to the cytoplasm. The catalysed reaction is N(6)-acetyl-L-lysyl-[protein] + NAD(+) + H2O = 2''-O-acetyl-ADP-D-ribose + nicotinamide + L-lysyl-[protein]. NAD-dependent protein deacetylase which modulates the activities of several enzymes which are inactive in their acetylated form. In Listeria innocua serovar 6a (strain ATCC BAA-680 / CLIP 11262), this protein is NAD-dependent protein deacetylase.